Reading from the N-terminus, the 303-residue chain is UDP-3-O-acyl-N-acetylglucosamine deacetylase (303 aa).

Zn(2+) contacts are provided by histidine 78, histidine 237, and aspartate 241. The Proton donor role is filled by histidine 264.

The protein belongs to the LpxC family. Zn(2+) is required as a cofactor.

The catalysed reaction is a UDP-3-O-[(3R)-3-hydroxyacyl]-N-acetyl-alpha-D-glucosamine + H2O = a UDP-3-O-[(3R)-3-hydroxyacyl]-alpha-D-glucosamine + acetate. Its pathway is glycolipid biosynthesis; lipid IV(A) biosynthesis; lipid IV(A) from (3R)-3-hydroxytetradecanoyl-[acyl-carrier-protein] and UDP-N-acetyl-alpha-D-glucosamine: step 2/6. Functionally, catalyzes the hydrolysis of UDP-3-O-myristoyl-N-acetylglucosamine to form UDP-3-O-myristoylglucosamine and acetate, the committed step in lipid A biosynthesis. The protein is UDP-3-O-acyl-N-acetylglucosamine deacetylase of Pseudomonas fluorescens (strain SBW25).